Here is a 419-residue protein sequence, read N- to C-terminus: Transcriptional regulator Myc-A (419 aa).

A 9aaTAD motif is present at residues 78–86; it reads EMVTEFLGG. Disordered regions lie at residues 141–166, 206–274, and 319–344; these read ALSS…HGSL, SPCQ…HYSP, and NNRK…NVLE. The segment covering 226–245 has biased composition (acidic residues); it reads ESEEEPEDEDEDCDEEEEID. Residues 248-261 are compositionally biased toward basic and acidic residues; sequence TVEKRQSASKRVES. Over residues 319–328 the composition is skewed to polar residues; it reads NNRKCASPRS. Residues 335 to 387 enclose the bHLH domain; the sequence is DKRKTHNVLERQRRNELKLSFFALRDQVPEVASNEKAPKVVILKKATEYAISL. Residues 387–415 form a leucine-zipper region; that stretch reads LQEDERRLIRETEQLKYRKEQLKQRLQQL.

As to quaternary structure, efficient DNA binding requires dimerization with another bHLH protein. Binds DNA as a heterodimer with MAX.

Its subcellular location is the nucleus. Its function is as follows. Transcription factor that binds DNA in a non-specific manner, yet also specifically recognizes the core sequence 5'-CAC[GA]TG-3'. Activates the transcription of growth-related genes. This is Transcriptional regulator Myc-A (myc-a) from Xenopus laevis (African clawed frog).